We begin with the raw amino-acid sequence, 436 residues long: UPF0597 protein YhaM (436 aa).

It belongs to the UPF0597 family.

This is UPF0597 protein YhaM from Salmonella paratyphi B (strain ATCC BAA-1250 / SPB7).